An 88-amino-acid polypeptide reads, in one-letter code: UPF0250 protein Shewmr4_0986 (88 aa).

The protein belongs to the UPF0250 family.

The protein is UPF0250 protein Shewmr4_0986 of Shewanella sp. (strain MR-4).